The chain runs to 478 residues: uncharacterized protein (478 aa).

In terms of domain architecture, ATP-grasp spans 174–366 (RQVLAAAGVP…LIGEHIKLAI (193 aa)). 214 to 219 (GSGSRG) is a binding site for ATP. The active site involves arginine 339.

This is an uncharacterized protein from Sinorhizobium fredii (strain NBRC 101917 / NGR234).